We begin with the raw amino-acid sequence, 623 residues long: MAKLEQYFDYVKINLASPERIRKWGERTLPNGQIVGEVTKPETINYRTLKPEMDGLFCERIFGPVKDWECHCGKYKRVRYKGIICERCGVEVAESKVRRHRMGHIELAAPVTHVWYLKSLPSYISILLDIPLKDVEQIVYFNSYIVTRPGNCPNLRYKQLLSEDEWIEIEDQLYQEDSNLYGVEVGIGAEAIQKLLKDVDLEVEAESLREDVLSAKGSKRDKAIKRLRVIDNFIATRSDPAWMILTVLPVIPPDLRPMVQLDGGRFATSDLNDLYRRVLNRNNRLIRLQEILAPEIIIRNEKRMLQESVDALIDNGRRGRTVVGANNRPLKSLSDIIEGKQGRFRQNLLGKRVDYSGRSVIVVGPTLQLNQCGLPREMALELFQPFVIHKLIHQGLVNNIKAAKKMIQKNDSVIWSVLEEVIQGHPVLLNRAPTLHRLGIQAFEPILVEGRAIKLHPLVCPAFNADFDGDQMAVHIPLSLEAQAEARLLMLAPYNFLSPATGEPIIMPSQDMVLGCYYLTTHNPSQQKSQAYYFSNLEDALLAYECKKIALHSYVWVRFEGEVEDENLKIRTSILKEKYTLDIFTERIIKTDEEKKVIAQYILTTPGRILLNKTLFDSLTLSN.

Zn(2+)-binding residues include cysteine 70, cysteine 72, cysteine 85, and cysteine 88. Mg(2+) is bound by residues aspartate 466, aspartate 468, and aspartate 470.

The protein belongs to the RNA polymerase beta' chain family. RpoC1 subfamily. In plastids the minimal PEP RNA polymerase catalytic core is composed of four subunits: alpha, beta, beta', and beta''. When a (nuclear-encoded) sigma factor is associated with the core the holoenzyme is formed, which can initiate transcription. Requires Mg(2+) as cofactor. Zn(2+) serves as cofactor.

Its subcellular location is the plastid. It is found in the chloroplast. The enzyme catalyses RNA(n) + a ribonucleoside 5'-triphosphate = RNA(n+1) + diphosphate. Functionally, DNA-dependent RNA polymerase catalyzes the transcription of DNA into RNA using the four ribonucleoside triphosphates as substrates. The sequence is that of DNA-directed RNA polymerase subunit beta' from Rhodomonas salina (Cryptomonas salina).